Here is a 132-residue protein sequence, read N- to C-terminus: MALLLTAVIVLICFGGLTSPSPVPSATALKELIEELVNITQNQKVPLCNGSMVWSLNLTSSMYCAALDSLISISNCSVIQRTKRMLNALCPHKPSAKQVSSEYVRDTKIEVAQFLKDLLRHSRIVFRNERFN.

The N-terminal stretch at 1 to 18 (MALLLTAVIVLICFGGLT) is a signal peptide. Asparagine 38, asparagine 49, asparagine 57, and asparagine 75 each carry an N-linked (GlcNAc...) asparagine glycan. Disulfide bonds link cysteine 48-cysteine 76 and cysteine 64-cysteine 90.

Belongs to the IL-4/IL-13 family. Interacts with IL13RA2.

The protein resides in the secreted. In terms of biological role, cytokine that plays important roles in allergic inflammation and immune response to parasite infection. Synergizes with IL2 in regulating interferon-gamma synthesis. Stimulates B-cell proliferation, and activation of eosinophils, basophils, and mast cells. Plays an important role in controlling IL33 activity by modulating the production of transmembrane and soluble forms of interleukin-1 receptor-like 1/IL1RL1. Displays the capacity to antagonize Th1-driven proinflammatory immune response and downregulates synthesis of many proinflammatory cytokines including IL1, IL6, IL10, IL12 and TNF-alpha through a mechanism that partially involves suppression of NF-kappa-B. Also functions on nonhematopoietic cells, including endothelial cells where it induces vascular cell adhesion protein 1/VCAM1, which is important in the recruitment of eosinophils. Exerts its biological effects through its receptors which comprises the IL4R chain and the IL13RA1 chain, to activate JAK1 and TYK2, leading to the activation of STAT6. Aside from IL13RA1, another receptor IL13RA2 acts as a high affinity decoy for IL13 and mediates internalization and depletion of extracellular IL13. This chain is Interleukin-13 (IL13), found in Bos taurus (Bovine).